We begin with the raw amino-acid sequence, 504 residues long: Putative arrestin-related trafficking adapter SPBC839.02 (504 aa).

The segment at 481–504 (QAPPPKYDDIFQSGSSHDENHDDN) is disordered.

It belongs to the ALY1 family.

May regulate endocytosis in response to extracellular stimuli. In Schizosaccharomyces pombe (strain 972 / ATCC 24843) (Fission yeast), this protein is Putative arrestin-related trafficking adapter SPBC839.02.